The sequence spans 107 residues: Nucleoid-associated protein Rru_A3472 (107 aa).

It belongs to the YbaB/EbfC family. As to quaternary structure, homodimer.

The protein resides in the cytoplasm. It is found in the nucleoid. Functionally, binds to DNA and alters its conformation. May be involved in regulation of gene expression, nucleoid organization and DNA protection. This is Nucleoid-associated protein Rru_A3472 from Rhodospirillum rubrum (strain ATCC 11170 / ATH 1.1.1 / DSM 467 / LMG 4362 / NCIMB 8255 / S1).